The chain runs to 202 residues: Small ribosomal subunit protein uS5 (202 aa).

The 64-residue stretch at 50-113 (LKQEILNINV…REAKLNLTPV (64 aa)) folds into the S5 DRBM domain.

The protein belongs to the universal ribosomal protein uS5 family. As to quaternary structure, part of the 30S ribosomal subunit. Contacts protein S4.

With S4 and S12 plays an important role in translational accuracy. The polypeptide is Small ribosomal subunit protein uS5 (Pyrobaculum islandicum (strain DSM 4184 / JCM 9189 / GEO3)).